Here is a 335-residue protein sequence, read N- to C-terminus: UPF0353 protein MAP_3435c (335 aa).

Helical transmembrane passes span 18-38 (WFFL…VQQF) and 67-87 (VPTI…AGPT). The VWFA domain occupies 98–294 (VVMLVIDVSE…DSLKNVYSTL (197 aa)). Residues 309 to 329 (MAWMLLGAVVLAGAVLAGLLL) form a helical membrane-spanning segment.

It belongs to the UPF0353 family.

It is found in the cell membrane. This chain is UPF0353 protein MAP_3435c, found in Mycolicibacterium paratuberculosis (strain ATCC BAA-968 / K-10) (Mycobacterium paratuberculosis).